The following is a 256-amino-acid chain: 5-keto-4-deoxy-D-glucarate aldolase (256 aa).

The active-site Proton acceptor is the His50. Gln151 serves as a coordination point for substrate. Glu153 is a binding site for Mg(2+). Substrate is bound by residues Ser178 and Asp179. A Mg(2+)-binding site is contributed by Asp179.

Belongs to the HpcH/HpaI aldolase family. KDGluc aldolase subfamily. In terms of assembly, homohexamer; trimer of dimers. Mg(2+) is required as a cofactor.

It carries out the reaction 5-dehydro-4-deoxy-D-glucarate = 2-hydroxy-3-oxopropanoate + pyruvate. The catalysed reaction is 2-dehydro-3-deoxy-D-glucarate = 2-hydroxy-3-oxopropanoate + pyruvate. It participates in carbohydrate acid metabolism; galactarate degradation; D-glycerate from galactarate: step 2/3. Functionally, catalyzes the reversible retro-aldol cleavage of both 5-keto-4-deoxy-D-glucarate and 2-keto-3-deoxy-D-glucarate to pyruvate and tartronic semialdehyde. The chain is 5-keto-4-deoxy-D-glucarate aldolase from Escherichia coli (strain ATCC 8739 / DSM 1576 / NBRC 3972 / NCIMB 8545 / WDCM 00012 / Crooks).